Here is a 210-residue protein sequence, read N- to C-terminus: MANAKELKQVLSGPIVSNNPIALQVLGVCSALAVTSKMETALVMTIALTAVCACSNLFISMLRNHIPSSVRIIVQMTIIASLVIVVDQVLQAYAYDVAKQLSVFVGLIITNCIVMGRAEAYAMKTPPMMSFMDGIGNGLGYGAILLSVGFVRELFGNGSLFGVEILSKISDGGWYQPNGLLLLPPSAFFLIGTLIWIIRTVKPEQVEAKG.

Helical transmembrane passes span 14 to 34 (PIVS…ALAV), 42 to 62 (LVMT…ISML), 72 to 92 (IIVQ…VLQA), 103 to 123 (VFVG…AYAM), 131 to 151 (FMDG…VGFV), and 178 to 198 (NGLL…IWII).

Belongs to the NqrDE/RnfAE family. Composed of six subunits; NqrA, NqrB, NqrC, NqrD, NqrE and NqrF.

It localises to the cell inner membrane. It carries out the reaction a ubiquinone + n Na(+)(in) + NADH + H(+) = a ubiquinol + n Na(+)(out) + NAD(+). In terms of biological role, NQR complex catalyzes the reduction of ubiquinone-1 to ubiquinol by two successive reactions, coupled with the transport of Na(+) ions from the cytoplasm to the periplasm. NqrA to NqrE are probably involved in the second step, the conversion of ubisemiquinone to ubiquinol. This Shewanella woodyi (strain ATCC 51908 / MS32) protein is Na(+)-translocating NADH-quinone reductase subunit D.